A 425-amino-acid chain; its full sequence is Serine hydroxymethyltransferase (425 aa).

(6S)-5,6,7,8-tetrahydrofolate contacts are provided by residues Leu124 and 128–130 (GHL). Lys233 carries the post-translational modification N6-(pyridoxal phosphate)lysine.

Belongs to the SHMT family. As to quaternary structure, homodimer. It depends on pyridoxal 5'-phosphate as a cofactor.

Its subcellular location is the cytoplasm. The enzyme catalyses (6R)-5,10-methylene-5,6,7,8-tetrahydrofolate + glycine + H2O = (6S)-5,6,7,8-tetrahydrofolate + L-serine. It functions in the pathway one-carbon metabolism; tetrahydrofolate interconversion. It participates in amino-acid biosynthesis; glycine biosynthesis; glycine from L-serine: step 1/1. Functionally, catalyzes the reversible interconversion of serine and glycine with tetrahydrofolate (THF) serving as the one-carbon carrier. This reaction serves as the major source of one-carbon groups required for the biosynthesis of purines, thymidylate, methionine, and other important biomolecules. Also exhibits THF-independent aldolase activity toward beta-hydroxyamino acids, producing glycine and aldehydes, via a retro-aldol mechanism. The sequence is that of Serine hydroxymethyltransferase from Clavibacter michiganensis subsp. michiganensis (strain NCPPB 382).